A 254-amino-acid polypeptide reads, in one-letter code: Type III pantothenate kinase (254 aa).

Residue 13–20 (MIGNTRQH) coordinates ATP. Residues Y84 and 88-91 (GLDR) contribute to the substrate site. Catalysis depends on D90, which acts as the Proton acceptor. Position 110 (D110) interacts with K(+). Residue T113 coordinates ATP. T166 contributes to the substrate binding site.

Belongs to the type III pantothenate kinase family. In terms of assembly, homodimer. NH4(+) serves as cofactor. It depends on K(+) as a cofactor.

It localises to the cytoplasm. The enzyme catalyses (R)-pantothenate + ATP = (R)-4'-phosphopantothenate + ADP + H(+). It functions in the pathway cofactor biosynthesis; coenzyme A biosynthesis; CoA from (R)-pantothenate: step 1/5. Its function is as follows. Catalyzes the phosphorylation of pantothenate (Pan), the first step in CoA biosynthesis. This Thermosynechococcus vestitus (strain NIES-2133 / IAM M-273 / BP-1) protein is Type III pantothenate kinase.